Reading from the N-terminus, the 333-residue chain is 2-oxoglutarate-dependent dioxygenase 21, chloroplastic (333 aa).

Residues 1 to 43 (MPAVAGSLYMASQHKGVPPPLPPPPRPLPVINLGRLTMDSASR) constitute a chloroplast transit peptide. Residues 180-281 (GVQFVALNNY…RISIASIHGL (102 aa)) form the Fe2OG dioxygenase domain. Fe cation is bound by residues His205, Asp207, and His262. Arg272 serves as a coordination point for 2-oxoglutarate.

Belongs to the iron/ascorbate-dependent oxidoreductase family. Fe(2+) serves as cofactor. L-ascorbate is required as a cofactor. In terms of tissue distribution, expressed in roots.

It localises to the plastid. The protein localises to the chloroplast. It carries out the reaction melatonin + 2-oxoglutarate + O2 = 2-hydroxymelatonin + succinate + CO2. Functionally, involved in melatonin degradation. Catalyzes the hydroxylation of melatonin to produce 2-hydroxymelatonin. This is 2-oxoglutarate-dependent dioxygenase 21, chloroplastic from Oryza sativa subsp. japonica (Rice).